The following is a 58-amino-acid chain: MAGPEADAQFHFTGIKKYFNSYTLTGRMNCVLATYGSIALIVLYFKLRSKKTPAVKAT.

An N6-acetyllysine; partial mark is found at Lys16 and Lys17. The chain crosses the membrane as a helical span at residues 23–45 (TLTGRMNCVLATYGSIALIVLYF).

Component of the ATP synthase complex composed at least of ATP5F1A/subunit alpha, ATP5F1B/subunit beta, ATP5MC1/subunit c (homooctomer), MT-ATP6/subunit a, MT-ATP8/subunit 8, ATP5ME/subunit e, ATP5MF/subunit f, ATP5MG/subunit g, ATP5MK/subunit k, ATP5MJ/subunit j, ATP5F1C/subunit gamma, ATP5F1D/subunit delta, ATP5F1E/subunit epsilon, ATP5PF/subunit F6, ATP5PB/subunit b, ATP5PD/subunit d, ATP5PO/subunit OSCP. ATP synthase complex consists of a soluble F(1) head domain (subunits alpha(3) and beta(3)) - the catalytic core - and a membrane F(0) domain - the membrane proton channel (subunits c, a, 8, e, f, g, k and j). These two domains are linked by a central stalk (subunits gamma, delta, and epsilon) rotating inside the F1 region and a stationary peripheral stalk (subunits F6, b, d, and OSCP). The ATP synthase complex/complex V exists as a monomeric and a dimeric supercomplex that helps shape mitochondrial cristae to optimize proton flow.

It localises to the mitochondrion membrane. In terms of biological role, subunit k, of the mitochondrial membrane ATP synthase complex (F(1)F(0) ATP synthase or Complex V) that produces ATP from ADP in the presence of a proton gradient across the membrane which is generated by electron transport complexes of the respiratory chain. ATP synthase complex consist of a soluble F(1) head domain - the catalytic core - and a membrane F(1) domain - the membrane proton channel. These two domains are linked by a central stalk rotating inside the F(1) region and a stationary peripheral stalk. During catalysis, ATP synthesis in the catalytic domain of F(1) is coupled via a rotary mechanism of the central stalk subunits to proton translocation. In vivo, can only synthesize ATP although its ATP hydrolase activity can be activated artificially in vitro. Part of the complex F(0) domain. Required for dimerization of the ATP synthase complex and as such regulates ATP synthesis in the mitochondria. The chain is ATP synthase F(0) complex subunit k, mitochondrial from Bos taurus (Bovine).